The chain runs to 735 residues: Translation factor GUF1 homolog, chloroplastic (735 aa).

Disordered regions lie at residues 1-38 (MAVP…PSTS) and 106-126 (PENA…GVDN). The transit peptide at 1–47 (MAVPTIPSPACISQSANGSIISTRRSTETNPRQHPSTSYRCAGRVVR) directs the protein to the chloroplast. Over residues 11 to 38 (CISQSANGSIISTRRSTETNPRQHPSTS) the composition is skewed to polar residues. The span at 106–115 (PENAEKDYSK) shows a compositional bias: basic and acidic residues. One can recognise a tr-type G domain in the interval 137–319 (SNIRNFSIIA…AVVKKIPPPK (183 aa)). Residues 146–153 (AHIDHGKS), 212–216 (DTPGH), and 266–269 (NKID) contribute to the GTP site.

Belongs to the TRAFAC class translation factor GTPase superfamily. Classic translation factor GTPase family. LepA subfamily.

Its subcellular location is the plastid. It is found in the chloroplast. It catalyses the reaction GTP + H2O = GDP + phosphate + H(+). In terms of biological role, promotes chloroplast protein synthesis. May act as a fidelity factor of the translation reaction, by catalyzing a one-codon backward translocation of tRNAs on improperly translocated ribosomes. This chain is Translation factor GUF1 homolog, chloroplastic, found in Physcomitrium patens (Spreading-leaved earth moss).